The following is a 559-amino-acid chain: 3-phosphoinositide-dependent protein kinase 1 (559 aa).

Y9 carries the post-translational modification Phosphotyrosine; by SRC and INSR. S25 carries the post-translational modification Phosphoserine. The disordered stretch occupies residues 25–83; sequence SPSMVRSQTEPGSSPGIPSGVSRQGSTMDGTTAEARPSTNPLQQHPAQLPPQPRKKRPE. Residues 35 to 44 show a composition bias toward low complexity; the sequence is PGSSPGIPSG. Over residues 45 to 54 the composition is skewed to polar residues; sequence VSRQGSTMDG. The Protein kinase domain occupies 85 to 345; sequence FKFGKILGEG…YGPLKAHPFF (261 aa). ATP is bound by residues 95–97 and K114; that span reads SFS. The PIF-pocket stretch occupies residues 116 to 160; the sequence is LEKRHIIKENKVPYVTRERDVMSRLDHPFFVKLYFTFQDDEKLYF. ATP contacts are provided by residues 163–165 and E169; that span reads SYA. The active-site Proton acceptor is D208. ATP contacts are provided by E212 and D226. S244 carries the phosphoserine modification. At K307 the chain carries N6-acetyllysine. Residue T357 is modified to Phosphothreonine; by MELK. 2 positions are modified to phosphotyrosine; by SRC and INSR: Y376 and Y379. S396 is modified (phosphoserine). S397 carries the phosphoserine; by MAP3K5 modification. At S399 the chain carries Phosphoserine. S401 carries the post-translational modification Phosphoserine; by MAP3K5. A Phosphoserine modification is found at S413. The region spanning 462–553 is the PH domain; it reads KMGPVDKRKG…EVWRQQYQSN (92 aa). At S504 the chain carries Phosphoserine; by PKC/PRKCQ. T516 carries the phosphothreonine; by autocatalysis modification. S532 carries the post-translational modification Phosphoserine; by PKC/PRKCQ.

Belongs to the protein kinase superfamily. AGC Ser/Thr protein kinase family. PDPK1 subfamily. As to quaternary structure, homodimer in its autoinhibited state. Active as monomer. Interacts with NPRL2, PAK1, PTK2B, GRB14, STRAP and IKKB. The Tyr-9 phosphorylated form interacts with SRC, RASA1 and CRK (via their SH2 domains). Interacts with SGK3 in a phosphorylation-dependent manner. The tyrosine-phosphorylated form interacts with PTPN6. The Ser-244 phosphorylated form interacts with YWHAH and YWHAQ. Binds INSR in response to insulin. Interacts (via PH domain) with SMAD3, SMAD4 and SMAD7. Interacts with PKN2; the interaction stimulates PDPK1 autophosphorylation, its PI(3,4,5)P3-dependent kinase activity toward 'Ser-473' of AKT1 but also activates its kinase activity toward PRKCD and PRKCZ. Interacts with PKN1 (via C-terminus) and PPARG. Post-translationally, phosphorylation on Ser-244 in the activation loop is required for full activity. PDPK1 itself can autophosphorylate Ser-244, leading to its own activation. Autophosphorylation is inhibited by the apoptotic C-terminus cleavage product of PKN2. Tyr-9 phosphorylation is critical for stabilization of both PDPK1 and the PDPK1/SRC complex via HSP90-mediated protection of PDPK1 degradation. Angiotensin II stimulates the tyrosine phosphorylation of PDPK1 in vascular smooth muscle in a calcium- and SRC-dependent manner. Phosphorylated on Tyr-9, Tyr-376 and Tyr-379 by INSR in response to insulin. Palmitate negatively regulates autophosphorylation at Ser-244 and palmitate-induced phosphorylation at Ser-532 and Ser-504 by PKC/PRKCQ negatively regulates its ability to phosphorylate PKB/AKT1. Phosphorylation at Thr-357 by MELK partially inhibits kinase activity, the inhibition is cooperatively enhanced by phosphorylation at Ser-397 and Ser-401 by MAP3K5. In terms of processing, monoubiquitinated in the kinase domain, deubiquitinated by USP4. In terms of tissue distribution, highly expressed in heart, brain, liver and testis, also expressed in embryonic cells.

The protein localises to the cytoplasm. It localises to the nucleus. Its subcellular location is the cell membrane. The protein resides in the cell junction. It is found in the focal adhesion. It catalyses the reaction L-seryl-[protein] + ATP = O-phospho-L-seryl-[protein] + ADP + H(+). The enzyme catalyses L-threonyl-[protein] + ATP = O-phospho-L-threonyl-[protein] + ADP + H(+). Its activity is regulated as follows. Homodimerization regulates its activity by maintaining the kinase in an autoinhibitory conformation. NPRL2 down-regulates its activity by interfering with tyrosine phosphorylation at the Tyr-9, Tyr-376 and Tyr-379 residues. The 14-3-3 protein YWHAQ acts as a negative regulator by association with the residues surrounding the Ser-244 residue. STRAP positively regulates its activity by enhancing its autophosphorylation and by stimulating its dissociation from YWHAQ. SMAD2, SMAD3, SMAD4 and SMAD7 also positively regulate its activity by stimulating its dissociation from YWHAQ. Activated by phosphorylation on Tyr-9, Tyr-376 and Tyr-379 by INSR in response to insulin. In terms of biological role, serine/threonine kinase which acts as a master kinase, phosphorylating and activating a subgroup of the AGC family of protein kinases. Its targets include: protein kinase B (PKB/AKT1, PKB/AKT2, PKB/AKT3), p70 ribosomal protein S6 kinase (RPS6KB1), p90 ribosomal protein S6 kinase (RPS6KA1, RPS6KA2 and RPS6KA3), cyclic AMP-dependent protein kinase (PRKACA), protein kinase C (PRKCD and PRKCZ), serum and glucocorticoid-inducible kinase (SGK1, SGK2 and SGK3), p21-activated kinase-1 (PAK1), TSSK3, protein kinase PKN (PKN1 and PKN2). Plays a central role in the transduction of signals from insulin by providing the activating phosphorylation to PKB/AKT1, thus propagating the signal to downstream targets controlling cell proliferation and survival, as well as glucose and amino acid uptake and storage. Negatively regulates the TGF-beta-induced signaling by: modulating the association of SMAD3 and SMAD7 with TGF-beta receptor, phosphorylating SMAD2, SMAD3, SMAD4 and SMAD7, preventing the nuclear translocation of SMAD3 and SMAD4 and the translocation of SMAD7 from the nucleus to the cytoplasm in response to TGF-beta. Activates PPARG transcriptional activity and promotes adipocyte differentiation. Activates the NF-kappa-B pathway via phosphorylation of IKKB. The tyrosine phosphorylated form is crucial for the regulation of focal adhesions by angiotensin II. Controls proliferation, survival, and growth of developing pancreatic cells. Participates in the regulation of Ca(2+) entry and Ca(2+)-activated K(+) channels of mast cells. Essential for the motility of vascular endothelial cells (ECs) and is involved in the regulation of their chemotaxis. Plays a critical role in cardiac homeostasis by serving as a dual effector for cell survival and beta-adrenergic response. Plays an important role during thymocyte development by regulating the expression of key nutrient receptors on the surface of pre-T cells and mediating Notch-induced cell growth and proliferative responses. Provides negative feedback inhibition to toll-like receptor-mediated NF-kappa-B activation in macrophages. The protein is 3-phosphoinositide-dependent protein kinase 1 (Pdpk1) of Mus musculus (Mouse).